The sequence spans 411 residues: Putative ion-transport protein YfeO (411 aa).

11 helical membrane passes run 9–29, 54–74, 99–119, 149–169, 186–206, 223–243, 258–278, 296–316, 322–342, 343–363, and 386–406; these read MLLL…VLIA, DSPF…GLII, ALPG…SLGP, ILAS…AALI, LFAP…FFHP, IASG…AVWC, VLIL…GGPL, LGAG…VIAA, GGRI…LHAH, VEAV…VLVV, and LLCI…LLAA.

It belongs to the chloride channel (TC 2.A.49) family.

The protein localises to the cell membrane. The sequence is that of Putative ion-transport protein YfeO from Salmonella choleraesuis (strain SC-B67).